A 638-amino-acid polypeptide reads, in one-letter code: MGKIIGIDLGTTNSCVAIMDGNKPRVLENSEGDRTTPSIIAYTEKGEVLVGQPAKRQAITNPKNTLFAIKRLIGRKFRDDEVQRDIKIMPYSIINSENGDAWIDVKKQKMAPPQISAEVLKKMKKTAEDYLGESIKEAVITVPAYFNDAQRQATKDAGRIAGLEVKRIINEPTAAALAYGLDKGEGNRTIAVYDLGGGTFDISIIEIDDVDKEKTFEVLATNGDTHLGGEDFDSRLINYLVQEFKKEQGIDLRNDSLAMQRLKEAAEKAKIELSSAQQTDVNLPYITADSNGPKHLNIKVTRSKLESLVEDLVMRSIEPLKVALKDAGLSVGDINDVILVGGQTRMPMVQSKVADFFGKEPRKDVNPDEAVAVGAAVQGGVLSGDVKDVLLLDVTPLSLGIETMGGIMTSLINKNTTIPTKHSQVFSTAEDNQSAVTIHILQGERKRALDNKSLGQFNLDGIEPAPRGTAQIEVTFDIDSDGILHVSAKDKKTGKEQKITIKASSGLNEEEIKKMINDAEANSEADRKFEELIQVRNQGDQLIHSIRKQLDENKNQIEKKELEKIKSALDELERSLKGENKSEIEKNIQNLLNISSKLTEINQKKSEENLKKEDTSSESKKDENVVDAEFEEIKDPKK.

Position 199 is a phosphothreonine; by autocatalysis (Thr199). The segment at 600-638 (EINQKKSEENLKKEDTSSESKKDENVVDAEFEEIKDPKK) is disordered. Over residues 602-624 (NQKKSEENLKKEDTSSESKKDEN) the composition is skewed to basic and acidic residues.

The protein belongs to the heat shock protein 70 family.

Functionally, acts as a chaperone. This chain is Chaperone protein DnaK, found in Buchnera aphidicola subsp. Schizaphis graminum (strain Sg).